We begin with the raw amino-acid sequence, 681 residues long: Methionine--tRNA ligase (681 aa).

The short motif at D27 to H37 is the 'HIGH' region element. Positions K316–S320 match the 'KMSKS' region motif. K319 serves as a coordination point for ATP. The segment at F522–Q571 is disordered. Over residues P525 to P539 the composition is skewed to basic and acidic residues. Positions D580–R681 constitute a tRNA-binding domain.

It belongs to the class-I aminoacyl-tRNA synthetase family. MetG type 2B subfamily. In terms of assembly, homodimer.

It localises to the cytoplasm. The enzyme catalyses tRNA(Met) + L-methionine + ATP = L-methionyl-tRNA(Met) + AMP + diphosphate. In terms of biological role, is required not only for elongation of protein synthesis but also for the initiation of all mRNA translation through initiator tRNA(fMet) aminoacylation. This chain is Methionine--tRNA ligase (metG), found in Deinococcus radiodurans (strain ATCC 13939 / DSM 20539 / JCM 16871 / CCUG 27074 / LMG 4051 / NBRC 15346 / NCIMB 9279 / VKM B-1422 / R1).